We begin with the raw amino-acid sequence, 257 residues long: tRNA-cytidine(32) 2-sulfurtransferase (257 aa).

Residues 37 to 42 (SGGKDS) carry the PP-loop motif motif. Positions 112, 115, and 202 each coordinate [4Fe-4S] cluster.

It belongs to the TtcA family. As to quaternary structure, homodimer. It depends on Mg(2+) as a cofactor. Requires [4Fe-4S] cluster as cofactor.

It is found in the cytoplasm. It catalyses the reaction cytidine(32) in tRNA + S-sulfanyl-L-cysteinyl-[cysteine desulfurase] + AH2 + ATP = 2-thiocytidine(32) in tRNA + L-cysteinyl-[cysteine desulfurase] + A + AMP + diphosphate + H(+). It functions in the pathway tRNA modification. In terms of biological role, catalyzes the ATP-dependent 2-thiolation of cytidine in position 32 of tRNA, to form 2-thiocytidine (s(2)C32). The sulfur atoms are provided by the cysteine/cysteine desulfurase (IscS) system. The chain is tRNA-cytidine(32) 2-sulfurtransferase from Geobacter metallireducens (strain ATCC 53774 / DSM 7210 / GS-15).